The sequence spans 956 residues: GAS2-like protein 2B (956 aa).

The region spanning 23-150 (YAMKEDLAEW…CLLELARRAS (128 aa)) is the Calponin-homology (CH) domain. The GAR domain maps to 191–263 (CDFKNLDQMV…HYLDKHDPCH (73 aa)). Composition is skewed to polar residues over residues 332-353 (SSSY…QTPP) and 381-390 (DPQQLGNPQS). Disordered stretches follow at residues 332-361 (SSSY…SMSI), 378-406 (DTQD…ASQL), 853-885 (RPKI…SRNN), and 914-956 (VNSE…ESWV). The span at 859–868 (RRDNRPEKKP) shows a compositional bias: basic and acidic residues.

This sequence belongs to the GAS2 family.

It is found in the cytoplasm. Its subcellular location is the cytoskeleton. The protein localises to the cilium basal body. Together with gas2l2.L, regulates ciliary orientation and performance. In Xenopus laevis (African clawed frog), this protein is GAS2-like protein 2B.